The sequence spans 467 residues: Cysteine--tRNA ligase (467 aa).

C27 is a binding site for Zn(2+). A 'HIGH' region motif is present at residues 29-39; that stretch reads PTVYNYIHIGN. Positions 207, 232, and 236 each coordinate Zn(2+). The 'KMSKS' region signature appears at 264–268; sequence KMSKS. K267 contacts ATP.

Belongs to the class-I aminoacyl-tRNA synthetase family. Monomer. Requires Zn(2+) as cofactor.

The protein localises to the cytoplasm. It carries out the reaction tRNA(Cys) + L-cysteine + ATP = L-cysteinyl-tRNA(Cys) + AMP + diphosphate. The sequence is that of Cysteine--tRNA ligase from Caldanaerobacter subterraneus subsp. tengcongensis (strain DSM 15242 / JCM 11007 / NBRC 100824 / MB4) (Thermoanaerobacter tengcongensis).